The following is a 94-amino-acid chain: Large ribosomal subunit protein bL28 (94 aa).

The disordered stretch occupies residues 1–21 (MARRCEVTGRGTVSGNNVSHS). Residues 11-20 (GTVSGNNVSH) show a composition bias toward polar residues.

This sequence belongs to the bacterial ribosomal protein bL28 family.

This Leptospira borgpetersenii serovar Hardjo-bovis (strain JB197) protein is Large ribosomal subunit protein bL28.